The chain runs to 303 residues: Cilia- and flagella-associated protein 161 (303 aa).

Microtubule inner protein component of sperm flagellar doublet microtubules.

Its subcellular location is the cytoplasm. The protein resides in the cytoskeleton. It is found in the cilium axoneme. The protein localises to the flagellum axoneme. Microtubule inner protein (MIP) part of the dynein-decorated doublet microtubules (DMTs) in cilia axoneme, which is required for motile cilia beating. The sequence is that of Cilia- and flagella-associated protein 161 from Mus musculus (Mouse).